A 176-amino-acid chain; its full sequence is RNA polymerase sigma factor SigO (176 aa).

Positions 30-43 (DARSLDELFKQFYK) match the Polymerase core binding motif. Residues 139–158 (MQEIADSLGESRQNISNIHK) constitute a DNA-binding region (H-T-H motif).

This sequence belongs to the sigma-70 factor family. Interacts with RNA polymerase.

Sigma factors are initiation factors that promote the attachment of RNA polymerase to specific initiation sites and are then released. Together with its coactivator RsoA, positively regulates the expression of at least three operons, including oxdC-yvrL, sigO-rsoA and yvrJ. Required for the acid stress-dependent induction of the oxalate decarboxylase oxdC. The chain is RNA polymerase sigma factor SigO (sigO) from Bacillus subtilis (strain 168).